The chain runs to 508 residues: Photosystem II CP47 reaction center protein (508 aa).

Transmembrane regions (helical) follow at residues 21-36, 101-115, 140-156, 203-218, 237-252, and 457-472; these read SVHI…WAGS, IVFS…IWHW, GIHL…FGAF, IAAG…FHLS, VLSS…AFVV, and SFAL…HGSR.

This sequence belongs to the PsbB/PsbC family. PsbB subfamily. PSII is composed of 1 copy each of membrane proteins PsbA, PsbB, PsbC, PsbD, PsbE, PsbF, PsbH, PsbI, PsbJ, PsbK, PsbL, PsbM, PsbT, PsbX, PsbY, PsbZ, Psb30/Ycf12, at least 3 peripheral proteins of the oxygen-evolving complex and a large number of cofactors. It forms dimeric complexes. The cofactor is Binds multiple chlorophylls. PSII binds additional chlorophylls, carotenoids and specific lipids..

The protein localises to the plastid. It is found in the chloroplast thylakoid membrane. In terms of biological role, one of the components of the core complex of photosystem II (PSII). It binds chlorophyll and helps catalyze the primary light-induced photochemical processes of PSII. PSII is a light-driven water:plastoquinone oxidoreductase, using light energy to abstract electrons from H(2)O, generating O(2) and a proton gradient subsequently used for ATP formation. This is Photosystem II CP47 reaction center protein from Lobularia maritima (Sweet alyssum).